Reading from the N-terminus, the 327-residue chain is Complex I intermediate-associated protein 30, mitochondrial (327 aa).

Residues 1–24 constitute a mitochondrion transit peptide; the sequence is MALVHKLLRGTYILRKFSKPASAL. The disordered stretch occupies residues 42-63; that stretch reads PVASPGKASSQRKTEGDLQGDH. Residues 53 to 63 show a composition bias toward basic and acidic residues; it reads RKTEGDLQGDH. Residue S318 is modified to Phosphoserine.

It belongs to the CIA30 family. As to quaternary structure, part of the mitochondrial complex I assembly/MCIA complex that comprises at least the core subunits TMEM126B, NDUFAF1, ECSIT and ACAD9 and complement subunits such as COA1 and TMEM186. Interacts with ECSIT. Interacts with ACAD9. At early stages of complex I assembly, it is found in intermediate subcomplexes that contain different subunits including NDUFB6, NDUFA6, NDUFA9, NDUFS3, NDUFS7, ND1, ND2 and ND3. Interacts with TMEM70 and TMEM242.

It localises to the mitochondrion. It is found in the mitochondrion matrix. In terms of biological role, as part of the MCIA complex, involved in the assembly of the mitochondrial complex I. This Pongo pygmaeus (Bornean orangutan) protein is Complex I intermediate-associated protein 30, mitochondrial.